Here is an 837-residue protein sequence, read N- to C-terminus: AdoMet-dependent rRNA methyltransferase SPB1 (837 aa).

Residues glycine 58, tryptophan 60, aspartate 78, aspartate 94, and aspartate 119 each contribute to the S-adenosyl-L-methionine site. Lysine 159 serves as the catalytic Proton acceptor. Residues 345–390 are a coiled coil; sequence LNEEEQIEKELRDLQEKQKQKQKREKRRKNEEKQKELTRMQMNMLT. Disordered regions lie at residues 359-381, 483-529, 573-644, and 779-808; these read QEKQ…QKEL, FRAK…DEDD, TDDV…TTKE, and TKKQ…KGIK. Positions 372–381 are enriched in basic and acidic residues; that stretch reads RKNEEKQKEL. Residues 518 to 529 are compositionally biased toward acidic residues; it reads ESDDSELSDEDD. The span at 593–602 shows a compositional bias: basic and acidic residues; that stretch reads SYNEMKKEDL. Residues 603 to 635 are compositionally biased toward acidic residues; the sequence is SDSSDEDSSSESDFEIVANDESDGDIDSDYDSD.

It belongs to the class I-like SAM-binding methyltransferase superfamily. RNA methyltransferase RlmE family. SPB1 subfamily. As to quaternary structure, component of the nucleolar and nucleoplasmic pre-60S ribosomal particle.

The protein resides in the nucleus. It is found in the nucleolus. The enzyme catalyses a ribonucleotide in rRNA + S-adenosyl-L-methionine = a 2'-O-methylribonucleotide in rRNA + S-adenosyl-L-homocysteine + H(+). Functionally, required for proper assembly of pre-ribosomal particles during the biogenesis of the 60S ribosomal subunit. The sequence is that of AdoMet-dependent rRNA methyltransferase SPB1 from Candida glabrata (strain ATCC 2001 / BCRC 20586 / JCM 3761 / NBRC 0622 / NRRL Y-65 / CBS 138) (Yeast).